Here is a 40-residue protein sequence, read N- to C-terminus: uncharacterized protein (40 aa).

This is an uncharacterized protein from Saccharomyces cerevisiae (strain ATCC 204508 / S288c) (Baker's yeast).